Reading from the N-terminus, the 372-residue chain is NAD(P)H-quinone oxidoreductase subunit 1 (372 aa).

Transmembrane regions (helical) follow at residues 29–49 (WIPF…LVVV), 97–117 (WLFT…YLIV), 130–150 (VGIF…LMAG), 176–196 (LALS…IDIV), 204–224 (ILGW…IAAL), 254–274 (FALF…VFAI), 308–328 (SLGI…AVLM), and 347–367 (FLLP…LAFP).

Belongs to the complex I subunit 1 family. In terms of assembly, NDH-1 is composed of at least 11 different subunits.

The protein localises to the cellular thylakoid membrane. It catalyses the reaction a plastoquinone + NADH + (n+1) H(+)(in) = a plastoquinol + NAD(+) + n H(+)(out). It carries out the reaction a plastoquinone + NADPH + (n+1) H(+)(in) = a plastoquinol + NADP(+) + n H(+)(out). Functionally, NDH-1 shuttles electrons from an unknown electron donor, via FMN and iron-sulfur (Fe-S) centers, to quinones in the respiratory and/or the photosynthetic chain. The immediate electron acceptor for the enzyme in this species is believed to be plastoquinone. Couples the redox reaction to proton translocation, and thus conserves the redox energy in a proton gradient. This Crocosphaera subtropica (strain ATCC 51142 / BH68) (Cyanothece sp. (strain ATCC 51142)) protein is NAD(P)H-quinone oxidoreductase subunit 1.